The following is a 93-amino-acid chain: Small ribosomal subunit protein uS19 (93 aa).

The protein belongs to the universal ribosomal protein uS19 family.

Functionally, protein S19 forms a complex with S13 that binds strongly to the 16S ribosomal RNA. This is Small ribosomal subunit protein uS19 from Ruminiclostridium cellulolyticum (strain ATCC 35319 / DSM 5812 / JCM 6584 / H10) (Clostridium cellulolyticum).